The sequence spans 500 residues: NAD(P)H-quinone oxidoreductase chain 4, chloroplastic (500 aa).

14 consecutive transmembrane segments (helical) span residues 4–24 (FPWL…MLFL), 35–55 (YTIC…CYNF), 87–107 (IGTI…AFPV), 113–130 (FFHF…GSFS), 134–154 (LLLF…LLSM), 167–187 (FILY…GISL), 211–231 (ILFY…IPLH), 242–262 (HYST…YGLV), 272–292 (AHSM…IYAA), 305–325 (IAYS…SITD), 330–350 (GAIL…FLAG), 386–406 (LALP…GIIT), 416–436 (IFII…LLSM), and 462–482 (LFLS…PDFV).

It belongs to the complex I subunit 4 family.

Its subcellular location is the plastid. The protein localises to the chloroplast thylakoid membrane. The enzyme catalyses a plastoquinone + NADH + (n+1) H(+)(in) = a plastoquinol + NAD(+) + n H(+)(out). It catalyses the reaction a plastoquinone + NADPH + (n+1) H(+)(in) = a plastoquinol + NADP(+) + n H(+)(out). The polypeptide is NAD(P)H-quinone oxidoreductase chain 4, chloroplastic (ndhD) (Arabidopsis thaliana (Mouse-ear cress)).